The primary structure comprises 298 residues: Acetylglutamate kinase (298 aa).

Residues 73-74 (GG), arginine 95, and asparagine 188 each bind substrate.

It belongs to the acetylglutamate kinase family. ArgB subfamily.

It localises to the cytoplasm. It catalyses the reaction N-acetyl-L-glutamate + ATP = N-acetyl-L-glutamyl 5-phosphate + ADP. It participates in amino-acid biosynthesis; L-arginine biosynthesis; N(2)-acetyl-L-ornithine from L-glutamate: step 2/4. Functionally, catalyzes the ATP-dependent phosphorylation of N-acetyl-L-glutamate. The protein is Acetylglutamate kinase of Nostoc punctiforme (strain ATCC 29133 / PCC 73102).